A 400-amino-acid chain; its full sequence is 2-octaprenylphenol hydroxylase (400 aa).

FAD is bound by residues 49–52 and 297–303; these read RVSA and LAGQGVN.

This sequence belongs to the UbiH/COQ6 family. As to quaternary structure, homotetramer. Component of the Ubi complex metabolon, which regroups five ubiquinone biosynthesis proteins (UbiE, UbiF, UbiG, UbiH and UbiI) and two accessory factors (UbiK and the lipid-binding protein UbiJ). Requires FAD as cofactor.

The protein resides in the cytoplasm. The enzyme catalyses 2-all-trans-octaprenylphenol + NADPH + O2 + H(+) = 3-(all-trans-octaprenyl)benzene-1,2-diol + NADP(+) + H2O. It catalyses the reaction a 2-(all-trans-polyprenyl)phenol + NADPH + O2 + H(+) = a 3-(all-trans-polyprenyl)benzene-1,2-diol + NADP(+) + H2O. The protein operates within cofactor biosynthesis; ubiquinone biosynthesis. Its function is as follows. FAD-dependent monooxygenase required for the aerobic hydroxylation of 2-octaprenylphenol to 2-octaprenyl-6-hydroxy-phenol, the first hydroxylation step in coenzyme Q (ubiquinone) biosynthesis. This is 2-octaprenylphenol hydroxylase from Escherichia coli (strain K12).